Here is an 849-residue protein sequence, read N- to C-terminus: Probable ATP-dependent RNA helicase ddx20 (849 aa).

The disordered stretch occupies residues 9-39; it reads FSNPMNSNSSNNIENNNNSNNNNNNFKNNFK. Residues 55–83 carry the Q motif motif; that stretch reads ITFSELLLQKEVLKGLEDGGYQRPSPIQL. ATP-binding positions include Arg-77, Gln-82, 99-106, and 102-107; these read AKSGTGKT and GTGKTI. One can recognise a Helicase ATP-binding domain in the interval 86 to 319; it reads IPLGISGVDL…KLYMNNENLV (234 aa). The short motif at 255–258 is the DEAD box element; sequence DEAD. The region spanning 355–499 is the Helicase C-terminal domain; that stretch reads KCKSLVLVLE…QIENENENEN (145 aa). Disordered stretches follow at residues 480 to 504, 572 to 644, 667 to 737, and 761 to 817; these read QQQQQQQQQQQIENENENENNNNNE, INEN…ENDN, SNNN…YPHY, and NNYN…NNPY. 3 stretches are compositionally biased toward acidic residues: residues 583 to 595, 604 to 615, and 624 to 644; these read NEDEEEEQEEDDY, EDEEEEQEEDDY, and EEEEQEQQEEDDDNYNYENDN. Low complexity-rich tracts occupy residues 667-687 and 696-720; these read SNNNNNNNKNKYGNTINNNHY and KNSINNNKFKNKNINNNDQRNSQSN.

It belongs to the DEAD box helicase family. DDX20 subfamily. As to quaternary structure, part of the core SMN complex.

It localises to the cytoplasm. The protein localises to the nucleus. It catalyses the reaction ATP + H2O = ADP + phosphate + H(+). The SMN complex catalyzes the assembly of small nuclear ribonucleoproteins (snRNPs), the building blocks of the spliceosome, and thereby plays an important role in the splicing of cellular pre-mRNAs. Most spliceosomal snRNPs contain a common set of Sm proteins SNRPB, SNRPD1, SNRPD2, SNRPD3, SNRPE, SNRPF and SNRPG that assemble in a heptameric protein ring on the Sm site of the small nuclear RNA to form the core snRNP (Sm core). In the cytosol, the Sm proteins SNRPD1, SNRPD2, SNRPE, SNRPF and SNRPG are trapped in an inactive 6S pICln-Sm complex by the chaperone CLNS1A that controls the assembly of the core snRNP. To assemble core snRNPs, the SMN complex accepts the trapped 5Sm proteins from CLNS1A forming an intermediate. Binding of snRNA inside 5Sm triggers eviction of the SMN complex, thereby allowing binding of SNRPD3 and SNRPB to complete assembly of the core snRNP. May also play a role in the metabolism of small nucleolar ribonucleoprotein (snoRNPs). The protein is Probable ATP-dependent RNA helicase ddx20 (ddx20) of Dictyostelium discoideum (Social amoeba).